A 430-amino-acid polypeptide reads, in one-letter code: Histidinol dehydrogenase (430 aa).

Residues tyrosine 130, glutamine 191, and asparagine 214 each coordinate NAD(+). Positions 237, 259, and 262 each coordinate substrate. Residues glutamine 259 and histidine 262 each contribute to the Zn(2+) site. Catalysis depends on proton acceptor residues glutamate 327 and histidine 328. Residues histidine 328, aspartate 361, glutamate 415, and histidine 420 each coordinate substrate. Residue aspartate 361 coordinates Zn(2+). Zn(2+) is bound at residue histidine 420.

Belongs to the histidinol dehydrogenase family. Requires Zn(2+) as cofactor.

It catalyses the reaction L-histidinol + 2 NAD(+) + H2O = L-histidine + 2 NADH + 3 H(+). It participates in amino-acid biosynthesis; L-histidine biosynthesis; L-histidine from 5-phospho-alpha-D-ribose 1-diphosphate: step 9/9. Its function is as follows. Catalyzes the sequential NAD-dependent oxidations of L-histidinol to L-histidinaldehyde and then to L-histidine. The chain is Histidinol dehydrogenase from Brucella abortus (strain 2308).